A 246-amino-acid chain; its full sequence is 3-deoxy-manno-octulosonate cytidylyltransferase (246 aa).

This sequence belongs to the KdsB family.

It is found in the cytoplasm. It catalyses the reaction 3-deoxy-alpha-D-manno-oct-2-ulosonate + CTP = CMP-3-deoxy-beta-D-manno-octulosonate + diphosphate. It functions in the pathway nucleotide-sugar biosynthesis; CMP-3-deoxy-D-manno-octulosonate biosynthesis; CMP-3-deoxy-D-manno-octulosonate from 3-deoxy-D-manno-octulosonate and CTP: step 1/1. Its pathway is bacterial outer membrane biogenesis; lipopolysaccharide biosynthesis. Its function is as follows. Activates KDO (a required 8-carbon sugar) for incorporation into bacterial lipopolysaccharide in Gram-negative bacteria. The polypeptide is 3-deoxy-manno-octulosonate cytidylyltransferase (Rickettsia massiliae (strain Mtu5)).